Reading from the N-terminus, the 445-residue chain is 3-phosphoshikimate 1-carboxyvinyltransferase (445 aa).

3-phosphoshikimate-binding residues include Lys21, Ser22, and Arg26. Residue Lys21 coordinates phosphoenolpyruvate. 2 residues coordinate phosphoenolpyruvate: Gly92 and Arg120. Residues Ser165, Gln166, Asp307, and Lys334 each coordinate 3-phosphoshikimate. Gln166 contributes to the phosphoenolpyruvate binding site. Asp307 (proton acceptor) is an active-site residue. Phosphoenolpyruvate is bound by residues Arg338, Arg379, and Lys405.

This sequence belongs to the EPSP synthase family. As to quaternary structure, monomer.

The protein resides in the cytoplasm. The catalysed reaction is 3-phosphoshikimate + phosphoenolpyruvate = 5-O-(1-carboxyvinyl)-3-phosphoshikimate + phosphate. It participates in metabolic intermediate biosynthesis; chorismate biosynthesis; chorismate from D-erythrose 4-phosphate and phosphoenolpyruvate: step 6/7. Its function is as follows. Catalyzes the transfer of the enolpyruvyl moiety of phosphoenolpyruvate (PEP) to the 5-hydroxyl of shikimate-3-phosphate (S3P) to produce enolpyruvyl shikimate-3-phosphate and inorganic phosphate. This Chlamydia abortus (strain DSM 27085 / S26/3) (Chlamydophila abortus) protein is 3-phosphoshikimate 1-carboxyvinyltransferase.